Consider the following 141-residue polypeptide: ATP synthase epsilon chain (141 aa).

It belongs to the ATPase epsilon chain family. As to quaternary structure, F-type ATPases have 2 components, CF(1) - the catalytic core - and CF(0) - the membrane proton channel. CF(1) has five subunits: alpha(3), beta(3), gamma(1), delta(1), epsilon(1). CF(0) has three main subunits: a, b and c.

It localises to the cell membrane. Functionally, produces ATP from ADP in the presence of a proton gradient across the membrane. This Mycoplasma mobile (strain ATCC 43663 / 163K / NCTC 11711) (Mesomycoplasma mobile) protein is ATP synthase epsilon chain.